Here is a 709-residue protein sequence, read N- to C-terminus: Methylmalonyl-CoA mutase (709 aa).

Residues 73 to 77 (TIRQY), 183 to 185 (TIQ), Arg195, Lys222, His232, and 271 to 273 (RLS) contribute to the substrate site. In terms of domain architecture, B12-binding spans 579–709 (RPRMLVVKMG…ILDLIREARS (131 aa)). His592 is a binding site for adenosylcob(III)alamin.

It belongs to the methylmalonyl-CoA mutase family. As to quaternary structure, homodimer. Adenosylcob(III)alamin serves as cofactor.

It catalyses the reaction (R)-methylmalonyl-CoA = succinyl-CoA. The protein operates within metabolic intermediate metabolism; propanoyl-CoA degradation; succinyl-CoA from propanoyl-CoA: step 3/3. In terms of biological role, radical enzyme that catalyzes the transformation of (2R)-methylmalonyl-CoA to succinyl-CoA. Is involved in the ethylmalonyl-CoA pathway for acetyl-CoA assimilation required for R.sphaeroides growth on acetate as sole carbon source. The sequence is that of Methylmalonyl-CoA mutase from Cereibacter sphaeroides (strain ATCC 17023 / DSM 158 / JCM 6121 / CCUG 31486 / LMG 2827 / NBRC 12203 / NCIMB 8253 / ATH 2.4.1.) (Rhodobacter sphaeroides).